The chain runs to 609 residues: Polyadenylate-binding protein 7 (609 aa).

4 RRM domains span residues 24-102, 112-189, 201-278, and 304-381; these read ASLY…WSVR, GNVF…KFMK, TNLY…RAQK, and SNIY…IAQK. Residues 509–586 form the PABC domain; the sequence is EMKKSIQQRQ…AFEVLKSSKT (78 aa).

It belongs to the polyadenylate-binding protein type-1 family. Expressed predominantly in siliques.

Its subcellular location is the cytoplasm. It is found in the nucleus. Functionally, binds the poly(A) tail of mRNA. Appears to be an important mediator of the multiple roles of the poly(A) tail in mRNA biogenesis, stability and translation. This is Polyadenylate-binding protein 7 (PAB7) from Arabidopsis thaliana (Mouse-ear cress).